Here is a 304-residue protein sequence, read N- to C-terminus: Protein Largen (304 aa).

The span at 1 to 13 (MSAKSKGNPSSSC) shows a compositional bias: polar residues. 4 disordered regions span residues 1–27 (MSAK…TKVK), 66–91 (QLED…TASS), 114–160 (LTVL…GGLP), and 239–304 (HPPG…TTTV). Residues 33–70 (IVEDLELVLGDLKDVAKELKEVVDQIDTLTSDLQLEDE) are a coiled coil. Residues 77–91 (TDTLNSSSSGTTASS) show a composition bias toward low complexity. Pro residues-rich tracts occupy residues 120 to 129 (PNPPPPPPRL), 239 to 261 (HPPG…PPFP), and 277 to 289 (PIRP…PTAP).

In terms of biological role, regulator of cell size that promotes cell size increase independently of mTOR and Hippo signaling pathways. Acts by stimulating the translation of specific mRNAs, including those encoding proteins affecting mitochondrial functions. Increases mitochondrial mass and respiration. The protein is Protein Largen (PRR16) of Homo sapiens (Human).